We begin with the raw amino-acid sequence, 109 residues long: ATP-dependent Clp protease adapter protein ClpS (109 aa).

It belongs to the ClpS family. In terms of assembly, binds to the N-terminal domain of the chaperone ClpA.

Functionally, involved in the modulation of the specificity of the ClpAP-mediated ATP-dependent protein degradation. In Lawsonia intracellularis (strain PHE/MN1-00), this protein is ATP-dependent Clp protease adapter protein ClpS.